A 352-amino-acid polypeptide reads, in one-letter code: Putative hetero-Diels-Alderase (352 aa).

The signal sequence occupies residues 1 to 20; sequence MRYHLSALVLVFTAFRETLT. 6 N-linked (GlcNAc...) asparagine glycosylation sites follow: Asn26, Asn41, Asn47, Asn135, Asn211, and Asn310.

This sequence belongs to the eupF Diels-Alderase family.

The protein operates within secondary metabolite biosynthesis; terpenoid biosynthesis. Its function is as follows. Putative hetero-Diels-Alderase; part of the gene cluster that mediates the biosynthesis of eupenifeldin, a bistropolone meroterpenoid that acts as an antitumor agent. The first step of eupenifeldin biosynthesis is the biosynthesis of 3-methylorcinaldehyde performed by the non-reducing polyketide synthase eupA. Oxidative dearomatization of 3-methylorcinaldehyde likely catalyzed by the FAD-dependent monooxygenase eupB is followed by oxidative ring expansion by the 2-oxoglutarate-dependent dioxygenase eupC to provide the first tropolone metabolite, tropolone stipitaldehyde. In parallel, generation of sesquiterpene alpha-humulene from farnesylpyrophosphate (FPP) is catalyzed by the terpene cyclase eupE. The cytochrome P450 monooxygenase eupD then hydroxylates humulene to humulenol. The putative Diels-Alderase eupF probably catalyzes the formation of the tropolone-humulene skeleton by linking humulenol and the polyketide moiety. The short-chain dehydrogenase/reductase eupG and the flavin-dependent monooxygenase eupH are also essential for eupenifeldin biosynthesis and are likely the additional decorating enzymes of the tropolone-humulene skeleton to produce final eupenifeldin or derivatives. This is Putative hetero-Diels-Alderase from Phoma sp.